We begin with the raw amino-acid sequence, 305 residues long: Ribonuclease BN (305 aa).

Positions 64, 66, 68, 69, 141, 212, and 270 each coordinate Zn(2+). D68 (proton acceptor) is an active-site residue.

It belongs to the RNase Z family. RNase BN subfamily. As to quaternary structure, homodimer. Zn(2+) is required as a cofactor.

Zinc phosphodiesterase, which has both exoribonuclease and endoribonuclease activities. This Escherichia coli O7:K1 (strain IAI39 / ExPEC) protein is Ribonuclease BN.